Consider the following 486-residue polypeptide: Kynurenine 3-monooxygenase (486 aa).

The next 2 membrane-spanning stretches (helical) occupy residues 401–424 and 437–459; these read LLFWMMPNTWVPLYNSVSFSHMRY and ILTRVLYGASIASVAAIGGLCYR.

This sequence belongs to the aromatic-ring hydroxylase family. KMO subfamily. Requires FAD as cofactor.

The protein resides in the mitochondrion. It localises to the membrane. The enzyme catalyses L-kynurenine + NADPH + O2 + H(+) = 3-hydroxy-L-kynurenine + NADP(+) + H2O. Its pathway is cofactor biosynthesis; NAD(+) biosynthesis; quinolinate from L-kynurenine: step 1/3. Functionally, catalyzes the hydroxylation of L-kynurenine (L-Kyn) to form 3-hydroxy-L-kynurenine (L-3OHKyn). Required for synthesis of quinolinic acid. This is Kynurenine 3-monooxygenase (kh) from Anopheles gambiae (African malaria mosquito).